Consider the following 164-residue polypeptide: Lipoprotein signal peptidase (164 aa).

Helical transmembrane passes span 6 to 26 (LGVL…LWLL), 39 to 59 (VLPF…GWFS), 65 to 85 (GQIL…IWMA), and 88 to 108 (TTKL…GNAI). Catalysis depends on residues Asp-118 and Asp-140. Residues 141–161 (VAIVVGVAALLYDSLIGLPAA) form a helical membrane-spanning segment.

Belongs to the peptidase A8 family.

Its subcellular location is the cell inner membrane. The enzyme catalyses Release of signal peptides from bacterial membrane prolipoproteins. Hydrolyzes -Xaa-Yaa-Zaa-|-(S,diacylglyceryl)Cys-, in which Xaa is hydrophobic (preferably Leu), and Yaa (Ala or Ser) and Zaa (Gly or Ala) have small, neutral side chains.. It functions in the pathway protein modification; lipoprotein biosynthesis (signal peptide cleavage). In terms of biological role, this protein specifically catalyzes the removal of signal peptides from prolipoproteins. This chain is Lipoprotein signal peptidase, found in Rhodopseudomonas palustris (strain ATCC BAA-98 / CGA009).